A 607-amino-acid polypeptide reads, in one-letter code: MSKIIGIDLGTTNSCMAVMEGGEAVVMPNAEGGRTTPSVVGFSKTGERLVGQVAKRQAISNPERTVTSIKRYMGTDHKVRIEGNEYTPQEISAMILQKMKTDAEAYLGSKVERAVITVPAYFSDAQRQATKDAGRIAGLKVERIINEPTAAALAYGLDKEEDQTILVFDLGGGTFDVSILELGDGVFEVKATSGNNRLGGDDFDQRIIDWIVAEFKKESGIDLSRDRMAMQRLREAAEKAKVELSSVVNTNINLPFITADAEGPKHLDLNLSRAKFEELTADLIEMTMGPTRQAMQDAGLEPKQIDKILLVGGATRMPSVQEAVRRFFGKEPHKGINPDECVAIGAAIQAGVLTGEVKDVVLLDVTPLSLGIETLGGVFTKIIERNTTIPTARSQIFTTAADNQPSVEIHVLQGERQMAAGNKTLGRFNLVGIPPAPRGIPQIEVTFDIDVNGIVNVSAKDLGTGKSQSITITGSTGLSDAEIERMVKEAEQYAEEDRKRREEVEIRNNADALVYQSEKTLKEHRDQADPNQVSELEQAVDRLKKALEGGDIERIKRETENLTGPLHAFTAAMYQKQAQQQQPGPGPDAGKDKDDKDKTVDADYEVK.

Threonine 174 is subject to Phosphothreonine; by autocatalysis. Residues 571 to 607 are disordered; the sequence is AAMYQKQAQQQQPGPGPDAGKDKDDKDKTVDADYEVK. Over residues 589 to 607 the composition is skewed to basic and acidic residues; sequence AGKDKDDKDKTVDADYEVK.

Belongs to the heat shock protein 70 family.

Its function is as follows. Acts as a chaperone. This Desulforudis audaxviator (strain MP104C) protein is Chaperone protein DnaK.